A 535-amino-acid polypeptide reads, in one-letter code: Ribonuclease Y 2 (535 aa).

Residues 1–21 traverse the membrane as a helical segment; it reads MLITGLIIGCLLIGLVIGYVV. Positions 207 to 268 constitute a KH domain; it reads LEHTVTVPNG…IRREVARVAL (62 aa). The HD domain maps to 334–427; it reads VLLHSIEVAQ…VAAADAISGA (94 aa).

Belongs to the RNase Y family.

Its subcellular location is the cell membrane. In terms of biological role, endoribonuclease that initiates mRNA decay. This is Ribonuclease Y 2 from Levilactobacillus brevis (strain ATCC 367 / BCRC 12310 / CIP 105137 / JCM 1170 / LMG 11437 / NCIMB 947 / NCTC 947) (Lactobacillus brevis).